Here is a 618-residue protein sequence, read N- to C-terminus: Vacuolar-sorting receptor 5 (618 aa).

An N-terminal signal peptide occupies residues 1 to 23 (MSPSNKGTVLALILALTMVVVNG). Topologically, residues 24 to 563 (FSSRFFVEKS…IERRSGSRSR (540 aa)) are lumenal. In terms of domain architecture, PA spans 58 to 164 (KYGGFMIGSV…SFGDSLKKAL (107 aa)). 3 N-linked (GlcNAc...) asparagine glycosylation sites follow: Asn81, Asn293, and Asn430. EGF-like domains are found at residues 412 to 462 (ETNE…TSCK) and 465 to 511 (GPAR…LKCE). 7 disulfides stabilise this stretch: Cys416–Cys434, Cys423–Cys443, Cys445–Cys461, Cys469–Cys489, Cys476–Cys497, Cys499–Cys510, and Cys540–Cys553. An EGF-like 3; calcium-binding domain is found at 512–554 (DIDECKEKSACKCDGCKCKNNWGGYECKCSNNSIYMKEEDTCI). Asn542 carries N-linked (GlcNAc...) asparagine glycosylation. A helical membrane pass occupies residues 564–584 (GLFTIVVLTAIAGISLGAYIF). At 585–618 (YKYHLQSYMDSEIVSIMSQYIPLDSQSINQDSFK) the chain is on the cytoplasmic side. The short motif at 604–607 (YIPL) is the Tyrosine-based internalization motif element.

This sequence belongs to the VSR (BP-80) family. As to expression, expressed in seedlings, roots, leaves, flowers and siliques.

The protein resides in the membrane. It localises to the golgi apparatus membrane. It is found in the cytoplasmic vesicle. The protein localises to the clathrin-coated vesicle membrane. Its subcellular location is the prevacuolar compartment membrane. Vacuolar-sorting receptor (VSR) involved in clathrin-coated vesicles sorting from Golgi apparatus to vacuoles. This is Vacuolar-sorting receptor 5 (VSR5) from Arabidopsis thaliana (Mouse-ear cress).